We begin with the raw amino-acid sequence, 493 residues long: Ribose import ATP-binding protein RbsA (493 aa).

ABC transporter domains follow at residues 5 to 241 (LKIS…VGRR) and 252 to 491 (EKGE…AAAI). ATP is bound at residue 37–44 (GENGAGKS).

This sequence belongs to the ABC transporter superfamily. Ribose importer (TC 3.A.1.2.1) family. As to quaternary structure, the complex is composed of an ATP-binding protein (RbsA), two transmembrane proteins (RbsC) and a solute-binding protein (RbsB).

It is found in the cell inner membrane. It catalyses the reaction D-ribose(out) + ATP + H2O = D-ribose(in) + ADP + phosphate + H(+). In terms of biological role, part of the ABC transporter complex RbsABC involved in ribose import. Responsible for energy coupling to the transport system. In Haemophilus influenzae (strain ATCC 51907 / DSM 11121 / KW20 / Rd), this protein is Ribose import ATP-binding protein RbsA.